The primary structure comprises 297 residues: Guanylate kinase (297 aa).

One can recognise a Guanylate kinase-like domain in the interval 5–184 (GKVIIISGPS…AVSKITDILI (180 aa)). 12–19 (GPSGVGKG) provides a ligand contact to ATP. The tract at residues 205 to 297 (ENIVDQKYTY…IKQRSDFSGD (93 aa)) is unknown.

The protein belongs to the guanylate kinase family.

The protein localises to the cytoplasm. The enzyme catalyses GMP + ATP = GDP + ADP. Its function is as follows. Essential for recycling GMP and indirectly, cGMP. The sequence is that of Guanylate kinase (gmk) from Mesoplasma florum (strain ATCC 33453 / NBRC 100688 / NCTC 11704 / L1) (Acholeplasma florum).